The sequence spans 79 residues: Protein RALF-like 35 (79 aa).

The signal sequence occupies residues 1–29 (MAAHKMSLTSLFFVSIVIVLSLFSGFGEG). 2 disulfide bridges follow: cysteine 45–cysteine 52 and cysteine 66–cysteine 72. An N-linked (GlcNAc...) asparagine glycan is attached at asparagine 68.

Belongs to the plant rapid alkalinization factor (RALF) family.

It localises to the secreted. Functionally, cell signaling peptide that may regulate plant stress, growth, and development. Mediates a rapid alkalinization of extracellular space by mediating a transient increase in the cytoplasmic Ca(2+) concentration leading to a calcium-dependent signaling events through a cell surface receptor and a concomitant activation of some intracellular mitogen-activated protein kinases. This is Protein RALF-like 35 from Arabidopsis thaliana (Mouse-ear cress).